We begin with the raw amino-acid sequence, 733 residues long: 1,4-alpha-glucan branching enzyme GlgB (733 aa).

Aspartate 413 functions as the Nucleophile in the catalytic mechanism. Glutamate 466 acts as the Proton donor in catalysis.

Belongs to the glycosyl hydrolase 13 family. GlgB subfamily. As to quaternary structure, monomer.

It catalyses the reaction Transfers a segment of a (1-&gt;4)-alpha-D-glucan chain to a primary hydroxy group in a similar glucan chain.. It participates in glycan biosynthesis; glycogen biosynthesis. Its function is as follows. Catalyzes the formation of the alpha-1,6-glucosidic linkages in glycogen by scission of a 1,4-alpha-linked oligosaccharide from growing alpha-1,4-glucan chains and the subsequent attachment of the oligosaccharide to the alpha-1,6 position. The sequence is that of 1,4-alpha-glucan branching enzyme GlgB from Leifsonia xyli subsp. xyli (strain CTCB07).